The following is a 469-amino-acid chain: Sulfate adenylyltransferase subunit 1 (469 aa).

Positions 22–236 (KDMLRVLTCG…LLNTVSVEQD (215 aa)) constitute a tr-type G domain. The G1 stretch occupies residues 31–38 (GSVDDGKS). GTP is bound at residue 31-38 (GSVDDGKS). Residues 89 to 93 (GITID) are G2. Residues 110–113 (DTPG) are G3. GTP-binding positions include 110-114 (DTPGH) and 165-168 (NKMD). Positions 165 to 168 (NKMD) are G4. The interval 202 to 204 (SAL) is G5.

The protein belongs to the TRAFAC class translation factor GTPase superfamily. Classic translation factor GTPase family. CysN/NodQ subfamily. In terms of assembly, heterodimer composed of CysD, the smaller subunit, and CysN.

The enzyme catalyses sulfate + ATP + H(+) = adenosine 5'-phosphosulfate + diphosphate. It functions in the pathway sulfur metabolism; hydrogen sulfide biosynthesis; sulfite from sulfate: step 1/3. Its function is as follows. With CysD forms the ATP sulfurylase (ATPS) that catalyzes the adenylation of sulfate producing adenosine 5'-phosphosulfate (APS) and diphosphate, the first enzymatic step in sulfur assimilation pathway. APS synthesis involves the formation of a high-energy phosphoric-sulfuric acid anhydride bond driven by GTP hydrolysis by CysN coupled to ATP hydrolysis by CysD. This is Sulfate adenylyltransferase subunit 1 from Shewanella woodyi (strain ATCC 51908 / MS32).